We begin with the raw amino-acid sequence, 68 residues long: Ferredoxin Fdx (68 aa).

5 residues coordinate [3Fe-4S] cluster: C12, Q13, A16, C18, and C56.

Requires [3Fe-4S] cluster as cofactor.

Ferredoxin that is the redox partner of cytochrome CYP51, a sterol 14alpha-demethylase encoded by an adjacent gene. This chain is Ferredoxin Fdx, found in Mycobacterium tuberculosis (strain ATCC 25618 / H37Rv).